The sequence spans 1496 residues: Rap guanine nucleotide exchange factor 2 (1496 aa).

2 disordered regions span residues 40–59 (HVSS…SSSL) and 68–101 (SEAG…SDPL). The segment covering 83–94 (VDSEDDDDEEDI) has biased composition (acidic residues). An a nucleoside 3',5'-cyclic phosphate-binding site is contributed by 135–254 (AFANMTMSVR…VEEEGEIVMV (120 aa)). The region spanning 267–380 (KGHIVIKGTS…RLLNIACAAK (114 aa)) is the N-terminal Ras-GEF domain. Residues 385–470 (LMTLTKPSRE…ITVKTNLFVF (86 aa)) enclose the PDZ domain. S501 bears the Phosphoserine mark. The 87-residue stretch at 606 to 692 (PDQVLRVFKA…GRYYLKNNME (87 aa)) folds into the Ras-associating domain. At T644 the chain carries Phosphothreonine; by PLK2. A Ras-GEF domain is found at 717-944 (STVEVATQLS…SQGSANATVL (228 aa)). Residue S806 is modified to Phosphoserine; by PLK2. A Phosphoserine modification is found at S930. 2 positions are modified to phosphoserine; by PLK2: S933 and S1022. Positions 1002 to 1051 (PATSTLPKNPGDKKPVKSETSPVAPRAGPQQKVQPQQPLAQPQPPHKVSQ) are disordered. The span at 1030–1041 (PQQKVQPQQPLA) shows a compositional bias: low complexity. Residues S1079, S1088, S1094, S1115, S1119, and S1158 each carry the phosphoserine modification. The segment at 1093-1159 (GSLERHRKQA…RSSIVSNSSF (67 aa)) is disordered. 2 stretches are compositionally biased toward low complexity: residues 1110–1124 (SSQL…QSSP) and 1140–1159 (SDSG…NSSF). Residue S1175 is modified to Phosphoserine; by PLK2. 3 disordered regions span residues 1224-1256 (STEE…SGSH), 1303-1369 (STKY…EEAK), and 1390-1496 (RKEG…VSAV). Over residues 1227–1237 (ELSHDQGDRAS) the composition is skewed to basic and acidic residues. Composition is skewed to polar residues over residues 1246-1256 (GSWTSCSSGSH) and 1306-1330 (YNRQ…SSTG). Low complexity predominate over residues 1440–1455 (PTEAPAPGQTPPAAAA). The span at 1485–1496 (AEEDEDEQVSAV) shows a compositional bias: acidic residues.

It belongs to the RAPGEF2 family. As to quaternary structure, found in a complex, at least composed of KIDINS220, MAGI2, NTRK1 and RAPGEF2; the complex is mainly formed at late endosomes in a neuronal growth factor (NGF)-dependent manner. Interacts (via C-terminal domain) with NEDD4 (via WW domains); this interaction leads to ubiquitination and degradation via the proteasome pathway in a cAMP-independent manner. Interacts with MAGI1 (via PDZ domain). Interacts with ADRB1 (via C-terminal PDZ motif); the interaction is direct. Interacts (via Ras-associating domain) with RAP1A (via GTP-bound active form). Interacts weakly with HRAS (via GDP- and GTP-bound forms). Interacts (via C-terminal domain) with MAGI2 (via PDZ and WW domains). Interacts with CDH1, CTNNB1 and TJP1. In terms of processing, ubiquitinated by NEDD4, leading to proteasomal degradation. Phosphorylation by PLK2 promotes its activity. As to expression, expressed in all layers of the cerebral cortex, hippocampus and cerebellum. Expressed in the cortical plate, cingulate cortex and the subventricular zone. Expressed in neurons and endocrine cells (at protein level). Expressed in melanoma cells.

The protein localises to the cytoplasm. The protein resides in the perinuclear region. It localises to the cell membrane. Its subcellular location is the late endosome. It is found in the cell junction. In terms of biological role, functions as a guanine nucleotide exchange factor (GEF), which activates Rap and Ras family of small GTPases by exchanging bound GDP for free GTP in a cAMP-dependent manner. Serves as a link between cell surface receptors and Rap/Ras GTPases in intracellular signaling cascades. Also acts as an effector for Rap1 by direct association with Rap1-GTP thereby leading to the amplification of Rap1-mediated signaling. Shows weak activity on HRAS. It is controversial whether RAPGEF2 binds cAMP and cGMP or not. Its binding to ligand-activated beta-1 adrenergic receptor ADRB1 leads to the Ras activation through the G(s)-alpha signaling pathway. Involved in the cAMP-induced Ras and Erk1/2 signaling pathway that leads to sustained inhibition of long term melanogenesis by reducing dendrite extension and melanin synthesis. Also provides inhibitory signals for cell proliferation of melanoma cells and promotes their apoptosis in a cAMP-independent nanner. Regulates cAMP-induced neuritogenesis by mediating the Rap1/B-Raf/ERK signaling through a pathway that is independent on both PKA and RAPGEF3/RAPGEF4. Involved in neuron migration and in the formation of the major forebrain fiber connections forming the corpus callosum, the anterior commissure and the hippocampal commissure during brain development. Involved in neuronal growth factor (NGF)-induced sustained activation of Rap1 at late endosomes and in brain-derived neurotrophic factor (BDNF)-induced axon outgrowth of hippocampal neurons. Plays a role in the regulation of embryonic blood vessel formation and in the establishment of basal junction integrity and endothelial barrier function. May be involved in the regulation of the vascular endothelial growth factor receptor KDR and cadherin CDH5 expression at allantois endothelial cell-cell junctions. This is Rap guanine nucleotide exchange factor 2 (Rapgef2) from Mus musculus (Mouse).